The chain runs to 167 residues: UPF0262 protein Nwi_0248 (167 aa).

Belongs to the UPF0262 family.

In Nitrobacter winogradskyi (strain ATCC 25391 / DSM 10237 / CIP 104748 / NCIMB 11846 / Nb-255), this protein is UPF0262 protein Nwi_0248.